Here is a 142-residue protein sequence, read N- to C-terminus: Large ribosomal subunit protein uL13 (142 aa).

This sequence belongs to the universal ribosomal protein uL13 family. In terms of assembly, part of the 50S ribosomal subunit.

In terms of biological role, this protein is one of the early assembly proteins of the 50S ribosomal subunit, although it is not seen to bind rRNA by itself. It is important during the early stages of 50S assembly. The polypeptide is Large ribosomal subunit protein uL13 (Bordetella avium (strain 197N)).